Reading from the N-terminus, the 541-residue chain is Chaperonin GroEL (541 aa).

ATP is bound by residues 29–32 (TLGP), 86–90 (DGTTT), Gly413, 480–482 (NAA), and Asp496.

Belongs to the chaperonin (HSP60) family. As to quaternary structure, forms a cylinder of 14 subunits composed of two heptameric rings stacked back-to-back. Interacts with the co-chaperonin GroES.

It is found in the cytoplasm. The enzyme catalyses ATP + H2O + a folded polypeptide = ADP + phosphate + an unfolded polypeptide.. In terms of biological role, together with its co-chaperonin GroES, plays an essential role in assisting protein folding. The GroEL-GroES system forms a nano-cage that allows encapsulation of the non-native substrate proteins and provides a physical environment optimized to promote and accelerate protein folding. The protein is Chaperonin GroEL of Gardnerella vaginalis.